The primary structure comprises 340 residues: DNA-directed RNA polymerase subunit alpha (340 aa).

The interval 1–236 is alpha N-terminal domain (alpha-NTD); sequence MLSLSKNWNT…EQLQLFISFE (236 aa). Residues 251 to 340 form an alpha C-terminal domain (alpha-CTD) region; that stretch reads FSPYLLKRVD…LSKRYEDSYN (90 aa).

It belongs to the RNA polymerase alpha chain family. As to quaternary structure, homodimer. The RNAP catalytic core consists of 2 alpha, 1 beta, 1 beta' and 1 omega subunit. When a sigma factor is associated with the core the holoenzyme is formed, which can initiate transcription.

The enzyme catalyses RNA(n) + a ribonucleoside 5'-triphosphate = RNA(n+1) + diphosphate. In terms of biological role, DNA-dependent RNA polymerase catalyzes the transcription of DNA into RNA using the four ribonucleoside triphosphates as substrates. This Rickettsia akari (strain Hartford) protein is DNA-directed RNA polymerase subunit alpha.